Here is a 508-residue protein sequence, read N- to C-terminus: Putative POTE ankyrin domain family member M (508 aa).

ANK repeat units lie at residues Gln-172 to Ile-201, Lys-205 to Ile-234, Tyr-238 to Ser-267, His-271 to Ala-300, and Tyr-304 to Ser-333. The disordered stretch occupies residues Ser-369–Gly-487. Composition is skewed to basic and acidic residues over residues Gln-377 to Gly-392 and Glu-406 to Lys-421. The span at Thr-476–Gly-487 shows a compositional bias: polar residues.

This sequence belongs to the POTE family.

This Homo sapiens (Human) protein is Putative POTE ankyrin domain family member M (POTEM).